Consider the following 219-residue polypeptide: Transmembrane emp24 domain-containing protein 10 (219 aa).

The N-terminal stretch at 1–31 (MSGSSGPQAQRGPCPFALLLLLLLGPSSVLA) is a signal peptide. Residues 1–142 (MSGSSGPQAQ…KNYEEIAKVE (142 aa)) are required for interaction with STX17. Over 32–185 (ISFHLPVNSR…RDTNESTNTR (154 aa)) the chain is Lumenal. Residues 41–193 (RKCLREEIHK…TRVLYFSIFS (153 aa)) form the GOLD domain. The interval 147-178 (LEVELRRLEDLSESIVNDFAYMKKREEEMRDT) is required for TMED10 and TMED2 cis-Golgi network localization. 2 positions are modified to dimethylated arginine: arginine 171 and arginine 176. A glycan (N-linked (GlcNAc...) asparagine) is linked at asparagine 179. Residues 186-206 (VLYFSIFSMFCLIGLATWQVF) form a helical membrane-spanning segment. The tract at residues 204–219 (QVFYLRRFFKAKKLIE) is interaction with COPG1. Residues 207 to 219 (YLRRFFKAKKLIE) are Cytoplasmic-facing. An interaction with ARF1 and IL1B region spans residues 207–219 (YLRRFFKAKKLIE). A COPII vesicle coat-binding motif is present at residues 211-212 (FF). The short motif at 211-219 (FFKAKKLIE) is the COPI vesicle coat-binding element.

It belongs to the EMP24/GP25L family. In terms of assembly, predominantly dimeric and to a lesser extent monomeric in the ER. Monomer and dimer in ERGIC and cis-Golgi network. Forms homooligomer (via GOLD domain); the assembly is promoted by direct binding with leaderless cargos and may form a protein channel that facilitates cargo entry into the ERGIC. Forms heterooligomeric complexes with other members of the p24 family such as TMED2, TMED7 and TMED9. Interacts (via GOLD domain) with TMED2 (via GOLD domain); the complex is required for export of TMED10 from the ER to the cis-Golgi network; the complex is proposed to be involved in cis-Golgi network dynamics and / or biogenesis. Associates with the COPI vesicle coat subunits (coatomer). Tetramerization of the cytoplasmic domain at the Golgi membrane in vitro; the complex is proposed to interact with COPI coatomer and induce budding of the vesicles. Interacts with COPG1; the interaction involves TMED10 homodimer. Interacts with ARF1 (GDP-bound); the interaction probably involves a TMED10 oligomer. Interacts with SEC23A, SEC24B, SEC24C and SEC24D components of the coat protein complex II/COPII, indicative of an association of TMED10 with the COPII vesicle coat. Interacts with CD59. Interacts with MPPE1/PGAP5; the complex might recruit and sort GPI-anchored proteins to the ER-exit site, or the interaction might lead to recycling of PGAP5 between the ER and the Golgi. Interacts with F2LR1/PAR2. Interacts with KDELR2/ERD2; the interaction is disrupted by KDELR2 ligand. Found in a complex composed at least of SURF4, TMED2 and TMED10. Associates with the presenilin-dependent gamma-secretase complex. Interacts with STX17; the interaction is direct. Interacts with IL-1; the interaction is direct. Interacts with RAB21 (active GTP-bound form); the interaction is indirect and regulates TMED10 abundance and localization at the Golgi.

It is found in the endoplasmic reticulum membrane. The protein resides in the endoplasmic reticulum-Golgi intermediate compartment membrane. Its subcellular location is the golgi apparatus membrane. The protein localises to the golgi apparatus. It localises to the cis-Golgi network membrane. It is found in the trans-Golgi network membrane. The protein resides in the cytoplasmic vesicle. Its subcellular location is the secretory vesicle membrane. The protein localises to the cell membrane. It localises to the melanosome. In terms of biological role, cargo receptor involved in protein vesicular trafficking and quality control in the endoplasmic reticulum (ER) and Golgi. The p24 protein family is a group of transmembrane proteins that bind coat protein complex I/COPI and coat protein complex II/COPII involved in vesicular trafficking between the membranes. Acts at the lumenal side for incorporation of secretory cargo molecules into transport vesicles and involved in vesicle coat formation at the cytoplasmic side. Mainly functions in the early secretory pathway and cycles between the ER, ER-Golgi intermediate compartment (ERGIC) and Golgi, mediating cargo transport through COPI and COPII-coated vesicles. In COPII vesicle-mediated anterograde transport, involved in the transport of GPI-anchored proteins by acting together with TMED2 as their cargo receptor; the function specifically implies SEC24C and SEC24D of the COPII vesicle coat and lipid raft-like microdomains of the ER. Recognizes GPI anchors structural remodeled in the ER by the GPI inositol-deacylase/PGAP1 and the metallophosphoesterase MPPE1/PGAP5. In COPI vesicle-mediated retrograde transport, involved in the biogenesis of COPI vesicles and vesicle coat recruitment. Involved in trafficking of amyloid beta A4 protein and soluble APP-beta release (independent from the modulation of gamma-secretase activity). Involved in the KDELR2-mediated retrograde transport of the toxin A subunit (CTX-A-K63)together with COPI and the COOH terminus of KDELR2. On Golgi membranes, acts as a primary receptor for ARF1-GDP, a GTP-binding protein involved in COPI-vesicle formation. Increases coatomer-dependent GTPase-activating activity of ARFGAP2 which mediates the hydrolysis of ARF1-bound GTP and therefore modulates protein trafficking from the Golgi apparatus. Involved in the exocytic trafficking of G protein-coupled receptors F2LR1/PAR2 (trypsin and tryspin-like enzyme receptor), OPRM1 (opioid receptor) and P2RY4 (UTD and UDP receptor) from the Golgi to the plasma membrane, thus contributing to receptor resensitization. In addition to its cargo receptor activity, may also act as a protein channel after oligomerization, facilitating the post-translational entry of leaderless cytoplasmic cargo into the ERGIC. Involved in the translocation into ERGIC, the vesicle entry and the secretion of leaderless cargos (lacking the secretion signal sequence), including the mature form of interleukin 1/IL-1 family members, the alpha-crystallin B chain HSPB5, the carbohydrate-binding proteins galectin-1/LGALS1 and galectin-3/LGALS3, the microtubule-associated protein Tau/MAPT, and the annexin A1/ANXA1; the translocation process is dependent on cargo protein unfolding and enhanced by chaperones HSP90AB1 and HSP90B1/GRP9. Could also associates with the presenilin-dependent gamma-secretase complex in order to regulate gamma-cleavages of the amyloid beta A4 protein to yield amyloid-beta 40/Abeta40. In Bos taurus (Bovine), this protein is Transmembrane emp24 domain-containing protein 10 (TMED10).